The sequence spans 313 residues: Ribose-phosphate pyrophosphokinase (313 aa).

ATP contacts are provided by residues 37-39 (DGE) and 96-97 (RQ). Mg(2+) contacts are provided by H131 and D170. The active site involves K193. Residues R195, D219, and 223–227 (DTAGT) contribute to the D-ribose 5-phosphate site.

This sequence belongs to the ribose-phosphate pyrophosphokinase family. Class I subfamily. Homohexamer. Mg(2+) serves as cofactor.

It localises to the cytoplasm. It carries out the reaction D-ribose 5-phosphate + ATP = 5-phospho-alpha-D-ribose 1-diphosphate + AMP + H(+). Its pathway is metabolic intermediate biosynthesis; 5-phospho-alpha-D-ribose 1-diphosphate biosynthesis; 5-phospho-alpha-D-ribose 1-diphosphate from D-ribose 5-phosphate (route I): step 1/1. Functionally, involved in the biosynthesis of the central metabolite phospho-alpha-D-ribosyl-1-pyrophosphate (PRPP) via the transfer of pyrophosphoryl group from ATP to 1-hydroxyl of ribose-5-phosphate (Rib-5-P). The polypeptide is Ribose-phosphate pyrophosphokinase (Pseudomonas syringae pv. tomato (strain ATCC BAA-871 / DC3000)).